Consider the following 256-residue polypeptide: Type III pantothenate kinase (256 aa).

Position 7–14 (7–14 (DVGNTRLK)) interacts with ATP. Substrate contacts are provided by residues tyrosine 96 and 103 to 106 (GADR). Residue aspartate 105 is the Proton acceptor of the active site. Residue threonine 133 coordinates ATP. Threonine 183 provides a ligand contact to substrate.

The protein belongs to the type III pantothenate kinase family. As to quaternary structure, homodimer. NH4(+) serves as cofactor. K(+) is required as a cofactor.

The protein localises to the cytoplasm. The enzyme catalyses (R)-pantothenate + ATP = (R)-4'-phosphopantothenate + ADP + H(+). It functions in the pathway cofactor biosynthesis; coenzyme A biosynthesis; CoA from (R)-pantothenate: step 1/5. Its function is as follows. Catalyzes the phosphorylation of pantothenate (Pan), the first step in CoA biosynthesis. The chain is Type III pantothenate kinase from Verminephrobacter eiseniae (strain EF01-2).